Here is a 903-residue protein sequence, read N- to C-terminus: Protein translocase subunit SecA (903 aa).

ATP-binding positions include glutamine 87, 105 to 109 (GEGKT), and aspartate 513. The segment covering 840 to 853 (MEAQRRAQAEEAAR) has biased composition (basic and acidic residues). The disordered stretch occupies residues 840-903 (MEAQRRAQAE…KYKQCHGQIN (64 aa)). Residues cysteine 887, cysteine 889, cysteine 898, and histidine 899 each contribute to the Zn(2+) site.

The protein belongs to the SecA family. As to quaternary structure, monomer and homodimer. Part of the essential Sec protein translocation apparatus which comprises SecA, SecYEG and auxiliary proteins SecDF-YajC and YidC. Zn(2+) is required as a cofactor.

Its subcellular location is the cell inner membrane. It localises to the cytoplasm. It catalyses the reaction ATP + H2O + cellular proteinSide 1 = ADP + phosphate + cellular proteinSide 2.. Its function is as follows. Part of the Sec protein translocase complex. Interacts with the SecYEG preprotein conducting channel. Has a central role in coupling the hydrolysis of ATP to the transfer of proteins into and across the cell membrane, serving both as a receptor for the preprotein-SecB complex and as an ATP-driven molecular motor driving the stepwise translocation of polypeptide chains across the membrane. The chain is Protein translocase subunit SecA from Vibrio cholerae serotype O1 (strain M66-2).